Reading from the N-terminus, the 295-residue chain is Sulfotransferase 1 family member D1 (295 aa).

3'-phosphoadenylyl sulfate is bound at residue 48–53 (KSGTTW). Substrate is bound by residues phenylalanine 81 and 106–108 (KTH). Histidine 108 functions as the Proton acceptor in the catalytic mechanism. Residues arginine 130 and serine 138 each contribute to the 3'-phosphoadenylyl sulfate site. Phenylalanine 142 provides a ligand contact to substrate. 3'-phosphoadenylyl sulfate-binding positions include tyrosine 193, serine 227, and 257–259 (RKG).

This sequence belongs to the sulfotransferase 1 family.

It is found in the cytoplasm. Functionally, sulfotransferase with broad substrate specificity that utilizes 3'-phospho-5'-adenylyl sulfate (PAPS) as sulfonate donor to catalyze the sulfate conjugation of catecholamines, such as dopamine, prostaglandins, leukotriene E4, drugs and xenobiotic compounds. Has sulfotransferase activity towards p-nitrophenol, 2-naphthylamine and minoxidil (in vitro). Sulfonation increases the water solubility of most compounds, and therefore their renal excretion, but it can also result in bioactivation to form active metabolites. In Rattus norvegicus (Rat), this protein is Sulfotransferase 1 family member D1 (Sult1d1).